The following is a 614-amino-acid chain: UPF0329 protein ECU03_0090 (614 aa).

Basic and acidic residues-rich tracts occupy residues 317–338 and 345–354; these read EREE…EESL and LRMEEKEKSK. Residues 317–420 form a disordered region; it reads EREEAEKMRG…KKSRSKGHRY (104 aa). The segment covering 355–364 has biased composition (basic residues); sequence SRGKKKKGGK. The segment covering 372-381 has biased composition (basic and acidic residues); the sequence is AKMEEEKKDS. Positions 382–394 are enriched in acidic residues; sequence EEVEESAEAEVSL. Residues 408–420 are compositionally biased toward basic residues; it reads SSKKKSRSKGHRY.

The protein belongs to the UPF0329 family.

This Encephalitozoon cuniculi (strain GB-M1) (Microsporidian parasite) protein is UPF0329 protein ECU03_0090.